The following is a 444-amino-acid chain: Trigger factor (444 aa).

Residues 170-255 (NDIAVIDFVG…LKAIKQLEIT (86 aa)) enclose the PPIase FKBP-type domain.

This sequence belongs to the FKBP-type PPIase family. Tig subfamily.

It localises to the cytoplasm. It carries out the reaction [protein]-peptidylproline (omega=180) = [protein]-peptidylproline (omega=0). Its function is as follows. Involved in protein export. Acts as a chaperone by maintaining the newly synthesized protein in an open conformation. Functions as a peptidyl-prolyl cis-trans isomerase. This Mycoplasma pneumoniae (strain ATCC 29342 / M129 / Subtype 1) (Mycoplasmoides pneumoniae) protein is Trigger factor (tig).